Consider the following 291-residue polypeptide: ATP synthase subunit a (291 aa).

Transmembrane regions (helical) follow at residues 48–68 (IHLD…LVFW), 108–128 (IAPL…MDLI), 161–181 (DPNI…FYSI), 241–261 (LIFI…SVPW), and 262–282 (AIFH…LTIV).

It belongs to the ATPase A chain family. In terms of assembly, F-type ATPases have 2 components, CF(1) - the catalytic core - and CF(0) - the membrane proton channel. CF(1) has five subunits: alpha(3), beta(3), gamma(1), delta(1), epsilon(1). CF(0) has three main subunits: a(1), b(2) and c(9-12). The alpha and beta chains form an alternating ring which encloses part of the gamma chain. CF(1) is attached to CF(0) by a central stalk formed by the gamma and epsilon chains, while a peripheral stalk is formed by the delta and b chains.

Its subcellular location is the cell inner membrane. Functionally, key component of the proton channel; it plays a direct role in the translocation of protons across the membrane. This is ATP synthase subunit a from Acinetobacter baylyi (strain ATCC 33305 / BD413 / ADP1).